An 859-amino-acid chain; its full sequence is Volume-regulated anion channel subunit LRRC8D (859 aa).

Residues 1–22 (MFTLAEVASLNDIQPTYRILKP) lie on the Cytoplasmic side of the membrane. The chain crosses the membrane as a helical span at residues 23–48 (WWDVFMDYLAVVMLMVAIFAGTMQLT). The Extracellular segment spans residues 49–164 (KDQVVCLPVL…YHLALPWYSK (116 aa)). Cys54 and Cys355 are disulfide-bonded. The tract at residues 110-138 (IPLQATHPHAESTLPNQEAKKEKRDPTGR) is disordered. Residues 127 to 138 (EAKKEKRDPTGR) show a composition bias toward basic and acidic residues. Residues 165-183 (YFPYLALIHTIILMVSSNF) traverse the membrane as a helical segment. Residues 184–309 (WFKYPKTCSK…EDSDLIYKLY (126 aa)) are Cytoplasmic-facing. The disordered stretch occupies residues 222–252 (SEENKQRITGAQTLPKHVSTSSDEGSPSAST). The span at 228–252 (RITGAQTLPKHVSTSSDEGSPSAST) shows a compositional bias: polar residues. 3 positions are modified to phosphoserine: Ser242, Ser243, and Ser247. The chain crosses the membrane as a helical span at residues 310-331 (VVQTLIKTAKFIFILCYTANFV). Residues 332-361 (NAISFEHVCKPKVEHLTGYEVFECTHNMAY) lie on the Extracellular side of the membrane. The helical transmembrane segment at 362 to 387 (MLKKLLISYISIICVYGFICLYTLFW) threads the bilayer. The Cytoplasmic portion of the chain corresponds to 388 to 859 (LFRIPLKEYS…DVNVPFANGI (472 aa)). LRR repeat units lie at residues 515–535 (NLQE…AFSF), 539–560 (HLRC…VYLL), 562–583 (NLRE…IGLE), 590–610 (HLKI…ITDV), 613–633 (HLTK…NSLK), 637–658 (NVAE…IFSL), 660–681 (NLQE…ISFQ), 685–706 (RLTC…ITHV), 708–729 (NLES…VFSL), 731–752 (KLRC…IGLL), 754–775 (NLQH…LFKC), 777–798 (KLRT…ISQL), and 800–821 (QLTQ…LGQC).

This sequence belongs to the LRRC8 family. Heterohexamer; oligomerizes with other LRRC8 proteins (LRRC8A, LRRC8B, LRRC8C and/or LRRC8E) to form a heterohexamer. In vivo, the subunit composition may depend primarily on expression levels, and heterooligomeric channels containing various proportions of the different LRRC8 proteins may coexist. In terms of tissue distribution, expressed in pancreatic beta cells. Also expressed in glucagon-secreting pancreatic alpha cells.

Its subcellular location is the cell membrane. The protein resides in the endoplasmic reticulum membrane. It catalyses the reaction chloride(in) = chloride(out). The catalysed reaction is iodide(out) = iodide(in). It carries out the reaction taurine(out) = taurine(in). Non-essential component of the volume-regulated anion channel (VRAC, also named VSOAC channel), an anion channel required to maintain a constant cell volume in response to extracellular or intracellular osmotic changes. The VRAC channel conducts iodide better than chloride and can also conduct organic osmolytes like taurine. Plays a redundant role in the efflux of amino acids, such as aspartate, in response to osmotic stress family member (LRRC8B, LRRC8C, LRRC8D or LRRC8E); channel characteristics depend on the precise subunit composition. Also acts as a regulator of glucose-sensing in pancreatic beta cells: VRAC currents, generated in response to hypotonicity- or glucose-induced beta cell swelling, depolarize cells, thereby causing electrical excitation, leading to increase glucose sensitivity and insulin secretion. VRAC channels containing LRRC8D inhibit transport of immunoreactive cyclic dinucleotide GMP-AMP (2'-3'-cGAMP), an immune messenger produced in response to DNA virus in the cytosol. This is Volume-regulated anion channel subunit LRRC8D from Mus musculus (Mouse).